The following is a 103-amino-acid chain: Small ribosomal subunit protein uS10 (103 aa).

The protein belongs to the universal ribosomal protein uS10 family. Part of the 30S ribosomal subunit.

In terms of biological role, involved in the binding of tRNA to the ribosomes. The chain is Small ribosomal subunit protein uS10 from Polynucleobacter asymbioticus (strain DSM 18221 / CIP 109841 / QLW-P1DMWA-1) (Polynucleobacter necessarius subsp. asymbioticus).